The sequence spans 256 residues: 2,3,4,5-tetrahydropyridine-2,6-dicarboxylate N-acetyltransferase (256 aa).

This sequence belongs to the transferase hexapeptide repeat family. DapH subfamily.

The enzyme catalyses (S)-2,3,4,5-tetrahydrodipicolinate + acetyl-CoA + H2O = L-2-acetamido-6-oxoheptanedioate + CoA. It participates in amino-acid biosynthesis; L-lysine biosynthesis via DAP pathway; LL-2,6-diaminopimelate from (S)-tetrahydrodipicolinate (acetylase route): step 1/3. In terms of biological role, catalyzes the transfer of an acetyl group from acetyl-CoA to tetrahydrodipicolinate. In Lactococcus lactis subsp. lactis (strain IL1403) (Streptococcus lactis), this protein is 2,3,4,5-tetrahydropyridine-2,6-dicarboxylate N-acetyltransferase.